A 190-amino-acid chain; its full sequence is Myophilin (190 aa).

The disordered stretch occupies residues Met1–Asp23. The Calponin-homology (CH) domain maps to Lys24–Cys130. Residues Val165–Met189 form a Calponin-like repeat.

It belongs to the calponin family. Muscle specific.

In Echinococcus granulosus (Hydatid tapeworm), this protein is Myophilin.